A 272-amino-acid polypeptide reads, in one-letter code: Cytochrome b-c1 complex subunit Rieske-1, mitochondrial (272 aa).

A mitochondrion-targeting transit peptide spans 1–60; sequence MLRVAGRRLFSVSQRSSTATSFVVSRDHTLSDGGGDSSSAPRSLPSADLSSYHRSLIRGF. The tract at residues 27–46 is disordered; it reads DHTLSDGGGDSSSAPRSLPS. The Mitochondrial matrix segment spans residues 61–109; it reads SSQVLAQGNEIGFGSEVPATVEAVKTPNSKIVYDDHNHERYPPGDPSKR. The chain crosses the membrane as a helical span at residues 110-132; it reads AFAYFVLSGGRFVYASVLRLLVL. The Mitochondrial intermembrane segment spans residues 133 to 272; that stretch reads KLIVSMSASK…FLEENKLLIG (140 aa). One can recognise a Rieske domain in the interval 201-270; the sequence is VRVKNPEWLV…YSFLEENKLL (70 aa). Positions 215, 217, 234, and 237 each coordinate [2Fe-2S] cluster. A disulfide bridge connects residues cysteine 220 and cysteine 236.

The protein belongs to the Rieske iron-sulfur protein family. In terms of assembly, component of the ubiquinol-cytochrome c oxidoreductase (cytochrome b-c1 complex, complex III, CIII), a multisubunit enzyme composed of 10 subunits. The complex is composed of 3 respiratory subunits cytochrome b (MT-CYB), cytochrome c1 (CYC1-1 or CYC1-2) and Rieske protein (UCR1-1 or UCR1-2), 2 core protein subunits MPPalpha1 (or MPPalpha2) and MPPB, and 5 low-molecular weight protein subunits QCR7-1 (or QCR7-2), UCRQ-1 (or UCRQ-2), QCR9, UCRY and probably QCR6-1 (or QCR6-2). The complex exists as an obligatory dimer and forms supercomplexes (SCs) in the inner mitochondrial membrane with NADH-ubiquinone oxidoreductase (complex I, CI), resulting in different assemblies (supercomplexes SCI(1)III(2) and SCI(2)III(4)). The cofactor is [2Fe-2S] cluster.

It localises to the mitochondrion inner membrane. It catalyses the reaction a quinol + 2 Fe(III)-[cytochrome c](out) = a quinone + 2 Fe(II)-[cytochrome c](out) + 2 H(+)(out). Functionally, component of the ubiquinol-cytochrome c oxidoreductase, a multisubunit transmembrane complex that is part of the mitochondrial electron transport chain which drives oxidative phosphorylation. The respiratory chain contains 3 multisubunit complexes succinate dehydrogenase (complex II, CII), ubiquinol-cytochrome c oxidoreductase (cytochrome b-c1 complex, complex III, CIII) and cytochrome c oxidase (complex IV, CIV), that cooperate to transfer electrons derived from NADH and succinate to molecular oxygen, creating an electrochemical gradient over the inner membrane that drives transmembrane transport and the ATP synthase. The cytochrome b-c1 complex catalyzes electron transfer from ubiquinol to cytochrome c, linking this redox reaction to translocation of protons across the mitochondrial inner membrane, with protons being carried across the membrane as hydrogens on the quinol. In the process called Q cycle, 2 protons are consumed from the matrix, 4 protons are released into the intermembrane space and 2 electrons are passed to cytochrome c. The Rieske protein is a catalytic core subunit containing a [2Fe-2S] iron-sulfur cluster. It cycles between 2 conformational states during catalysis to transfer electrons from the quinol bound in the Q(0) site in cytochrome b to cytochrome c1. This chain is Cytochrome b-c1 complex subunit Rieske-1, mitochondrial, found in Arabidopsis thaliana (Mouse-ear cress).